The primary structure comprises 198 residues: Putative mycofactocin biosynthesis transcriptional regulator MftR (198 aa).

Residues 12-72 (STTPHHISDV…GDFSTHLAQL (61 aa)) enclose the HTH tetR-type domain. The segment at residues 35–54 (SVDDIARAAGIARRTLFRYY) is a DNA-binding region (H-T-H motif).

In terms of biological role, may regulate a gene cluster involved in mycofactocin expression. Mycofactocin is a conserved polypeptide that might serve as an electron carrier. This is Putative mycofactocin biosynthesis transcriptional regulator MftR (mftR) from Mycobacterium tuberculosis (strain ATCC 25618 / H37Rv).